Reading from the N-terminus, the 241-residue chain is CNKLKLDKAERGDKASVDNTELLKWLDLWEPGSVIYACLGSISGLTSWQLAELGLGLESTNQPFIWVIREGEKSEGLEKWILEEGYEERKRKREDFWIRGWSPQVLILSHPAIGAFFTHCGWNSTLEGISAGVPIVACPLFAEQFYNEKLVVEVLGIGVSVGVEAAVTWGLEDKCGAVMKKEQVKKAIEIVMDKGKEGEERRRRAREIGEMAKRTIEEGGSSYLDMEMLIQYVSERSPSRA.

Positions 104, 119, 122, 123, 124, and 127 each coordinate UDP-alpha-D-glucose. Ala-142 serves as a coordination point for an anthocyanidin. UDP-alpha-D-glucose is bound by residues Glu-143 and Gln-144.

This sequence belongs to the UDP-glycosyltransferase family. Faintly expressed in cotyledons, roots and leaves.

It catalyses the reaction an anthocyanidin + UDP-alpha-D-glucose + H(+) = an anthocyanidin 3-O-beta-D-glucoside + UDP. The protein operates within pigment biosynthesis; anthocyanin biosynthesis. Its function is as follows. In the presence of other necessary color factors, this glycosylation reaction allows the accumulation of anthocyanin pigments. The polypeptide is Anthocyanidin 3-O-glucosyltransferase 4 (GT4) (Manihot esculenta (Cassava)).